The following is a 199-amino-acid chain: Putative pseudouridine methyltransferase (199 aa).

Positions 132 and 186 each coordinate S-adenosyl-L-methionine.

It belongs to the methyltransferase superfamily. TrmY family.

The protein resides in the cytoplasm. The chain is Putative pseudouridine methyltransferase from Vibrio campbellii (strain ATCC BAA-1116).